Here is a 223-residue protein sequence, read N- to C-terminus: MKRN2 opposite strand protein (223 aa).

This chain is MKRN2 opposite strand protein (MKRN2OS), found in Homo sapiens (Human).